Reading from the N-terminus, the 258-residue chain is Acetylglutamate kinase (258 aa).

Residues 41–42, Arg-63, and Asn-156 each bind substrate; that span reads GG.

The protein belongs to the acetylglutamate kinase family. ArgB subfamily.

The protein resides in the cytoplasm. It catalyses the reaction N-acetyl-L-glutamate + ATP = N-acetyl-L-glutamyl 5-phosphate + ADP. Its pathway is amino-acid biosynthesis; L-arginine biosynthesis; N(2)-acetyl-L-ornithine from L-glutamate: step 2/4. Catalyzes the ATP-dependent phosphorylation of N-acetyl-L-glutamate. This chain is Acetylglutamate kinase, found in Geobacillus thermodenitrificans (strain NG80-2).